The primary structure comprises 196 residues: Large ribosomal subunit protein eL15 (196 aa).

Disordered stretches follow at residues 72–93 and 163–196; these read SARK…TRIT and GLTG…GKGK.

Belongs to the eukaryotic ribosomal protein eL15 family. In terms of assembly, part of the 50S ribosomal subunit. Interacts with protein L7Ae and weakly with L44e.

This Haloarcula marismortui (strain ATCC 43049 / DSM 3752 / JCM 8966 / VKM B-1809) (Halobacterium marismortui) protein is Large ribosomal subunit protein eL15 (rpl15e).